The following is a 192-amino-acid chain: Cell division protein SepF (192 aa).

The segment at 154–192 is disordered; that stretch reads QEEPAPSNVTTTTQQSEETISESVTAPEPAWGTPVASAI. The segment covering 162 to 178 has biased composition (low complexity); it reads VTTTTQQSEETISESVT.

This sequence belongs to the SepF family. In terms of assembly, homodimer. Interacts with FtsZ.

It localises to the cytoplasm. Its function is as follows. Cell division protein that is part of the divisome complex and is recruited early to the Z-ring. Probably stimulates Z-ring formation, perhaps through the cross-linking of FtsZ protofilaments. Its function overlaps with FtsA. This Prochlorococcus marinus (strain MIT 9211) protein is Cell division protein SepF.